Here is a 91-residue protein sequence, read N- to C-terminus: Small ribosomal subunit protein bS20 (91 aa).

The segment at 72-91 (KNAASRQKSRLAKKLNGLSA) is disordered.

The protein belongs to the bacterial ribosomal protein bS20 family.

In terms of biological role, binds directly to 16S ribosomal RNA. This Halalkalibacterium halodurans (strain ATCC BAA-125 / DSM 18197 / FERM 7344 / JCM 9153 / C-125) (Bacillus halodurans) protein is Small ribosomal subunit protein bS20.